The sequence spans 260 residues: Proteasome subunit alpha (260 aa).

The span at 237-248 shows a compositional bias: low complexity; that stretch reads ASTDAPAAAADS. The disordered stretch occupies residues 237 to 260; the sequence is ASTDAPAAAADSADVEERPDSEAP. Positions 251–260 are enriched in basic and acidic residues; it reads VEERPDSEAP.

It belongs to the peptidase T1A family. In terms of assembly, the 20S proteasome core is composed of 14 alpha and 14 beta subunits that assemble into four stacked heptameric rings, resulting in a barrel-shaped structure. The two inner rings, each composed of seven catalytic beta subunits, are sandwiched by two outer rings, each composed of seven alpha subunits. The catalytic chamber with the active sites is on the inside of the barrel. Has a gated structure, the ends of the cylinder being occluded by the N-termini of the alpha-subunits. Is capped by the proteasome-associated ATPase, ARC.

The protein localises to the cytoplasm. Its pathway is protein degradation; proteasomal Pup-dependent pathway. The formation of the proteasomal ATPase ARC-20S proteasome complex, likely via the docking of the C-termini of ARC into the intersubunit pockets in the alpha-rings, may trigger opening of the gate for substrate entry. Interconversion between the open-gate and close-gate conformations leads to a dynamic regulation of the 20S proteasome proteolysis activity. Functionally, component of the proteasome core, a large protease complex with broad specificity involved in protein degradation. The sequence is that of Proteasome subunit alpha from Salinispora tropica (strain ATCC BAA-916 / DSM 44818 / JCM 13857 / NBRC 105044 / CNB-440).